The primary structure comprises 562 residues: Arf-GAP domain and FG repeat-containing protein 1 (562 aa).

The Arf-GAP domain occupies 11–135 (EKHLKMLRDM…WYVPPEQAKV (125 aa)). The C4-type zinc-finger motif lies at 29–52 (CFDCDQRGPTYVNMTVGSFVCTSC). The interval 145 to 193 (GSSASSTSSTPEVKPLKSLLGDSAPTLHLNKGTPSQSPVVGRSQGQQQE) is disordered. A Phosphoserine modification is found at Ser167. Residues 176–191 (GTPSQSPVVGRSQGQQ) show a composition bias toward polar residues. Position 177 is a phosphothreonine (Thr177). 2 positions are modified to phosphoserine: Ser181 and Ser362. Ser367 carries O-linked (GlcNAc) serine glycosylation.

As to quaternary structure, interacts with EPS15R and EPS15. Interacts with FCHO1. O-glycosylated. As to expression, ubiquitously expressed.

Its subcellular location is the nucleus. The protein resides in the cytoplasmic vesicle. Its function is as follows. Required for vesicle docking or fusion during acrosome biogenesis. May play a role in RNA trafficking or localization. In case of infection by HIV-1, acts as a cofactor for viral Rev and promotes movement of Rev-responsive element-containing RNAs from the nuclear periphery to the cytoplasm. This step is essential for HIV-1 replication. The sequence is that of Arf-GAP domain and FG repeat-containing protein 1 (AGFG1) from Homo sapiens (Human).